The following is a 183-amino-acid chain: MKNLFSLLKLTVFTLILFAVIYPLAIYGIAKLAPNQGKGETISVNGKVVGYQKIGQKFDKSNYFWGRPSAVDYNAAGSAGSNKGPSNADYLALVQKRIDTLLLVHPYLKKSDIPVDMVTASGSGLDPNISPQGALIQVKRIAKERMLDEAKVKSLVESKINTAVVGPETVNVLELNVALDQLK.

A helical transmembrane segment spans residues 10–30 (LTVFTLILFAVIYPLAIYGIA).

This sequence belongs to the KdpC family. As to quaternary structure, the system is composed of three essential subunits: KdpA, KdpB and KdpC.

It localises to the cell inner membrane. Part of the high-affinity ATP-driven potassium transport (or Kdp) system, which catalyzes the hydrolysis of ATP coupled with the electrogenic transport of potassium into the cytoplasm. This subunit acts as a catalytic chaperone that increases the ATP-binding affinity of the ATP-hydrolyzing subunit KdpB by the formation of a transient KdpB/KdpC/ATP ternary complex. This chain is Potassium-transporting ATPase KdpC subunit, found in Flavobacterium johnsoniae (strain ATCC 17061 / DSM 2064 / JCM 8514 / BCRC 14874 / CCUG 350202 / NBRC 14942 / NCIMB 11054 / UW101) (Cytophaga johnsonae).